Consider the following 323-residue polypeptide: Sphingolipid delta(4)-desaturase DES1 (323 aa).

2 helical membrane-spanning segments follow: residues 41–61 (HNLIWIVSLMVLTQLVAFYLV) and 68–88 (WLLFWTYVVGSCISHSMTLAI). The Histidine box-1 signature appears at 89–93 (HEISH). The chain crosses the membrane as a helical span at residues 104-124 (WNRCFGMFANLPLGLPYSVSF). The short motif at 128–132 (HMDHH) is the Histidine box-2 element. 3 helical membrane passes run 152–172 (FFCTPLRKLVWIILQPLFYTI), 185–205 (LEIINLVVQFSFDALIYYTLG), and 210–230 (FYMLVGSILGLGLHPISGHFI). The short motif at 259–263 (HNEHH) is the Histidine box-3 element.

Belongs to the fatty acid desaturase type 1 family. DEGS subfamily. In terms of assembly, interacts with RLBP1; the interaction increases synthesis of chromophore-precursors by DEGS1.

The protein resides in the endoplasmic reticulum membrane. The enzyme catalyses an N-acylsphinganine + 2 Fe(II)-[cytochrome b5] + O2 + 2 H(+) = an N-acylsphing-4-enine + 2 Fe(III)-[cytochrome b5] + 2 H2O. It catalyses the reaction all-trans-retinol = 11-cis-retinol. The catalysed reaction is all-trans-retinol = 9-cis-retinol. It carries out the reaction all-trans-retinol = 13-cis-retinol. The enzyme catalyses 11-cis-retinol = 13-cis-retinol. It catalyses the reaction 11-cis-retinol = 9-cis-retinol. Functionally, has sphingolipid-delta-4-desaturase activity. Converts D-erythro-sphinganine to D-erythro-sphingosine (E-sphing-4-enine). Catalyzes the equilibrium isomerization of retinols. The sequence is that of Sphingolipid delta(4)-desaturase DES1 (degs1) from Xenopus tropicalis (Western clawed frog).